We begin with the raw amino-acid sequence, 257 residues long: UPF0246 protein CPS_4102 (257 aa).

Belongs to the UPF0246 family.

This is UPF0246 protein CPS_4102 from Colwellia psychrerythraea (strain 34H / ATCC BAA-681) (Vibrio psychroerythus).